The chain runs to 343 residues: Labda-7,13(16),14-triene synthase (343 aa).

Residues Asp114 and Glu119 each coordinate Mg(2+). The DDXXXE motif motif lies at 114 to 119 (DDVHVE). Position 206 (Arg206) interacts with substrate. Asn252, Ser256, and Glu260 together coordinate Mg(2+). An NXXXSXXXE motif motif is present at residues 252–260 (NDLYSFAYE).

It belongs to the terpene synthase family. The cofactor is Mg(2+).

The catalysed reaction is (13E)-labda-7,13-dien-15-yl diphosphate = labda-7,13(16),14-triene + diphosphate. Its function is as follows. Involved in the biosynthesis of the labdane-type bicyclic diterpene labda-7,13(16),14-triene. Catalyzes the conversion of labda-7,13(E)-dienyl diphosphate to yield labda-7,13(16),14-triene. The sequence is that of Labda-7,13(16),14-triene synthase from Streptomyces clavuligerus.